A 121-amino-acid chain; its full sequence is Tachykinin-3 (121 aa).

A signal peptide spans 1 to 16 (MRIMLLFTAILAFSLA). The propeptide occupies 17–78 (QSFGAVCKEP…TDPKESTSPE (62 aa)). Residue Met90 is modified to Methionine amide. The disordered stretch occupies residues 93-121 (RSVQPDSPTDVNQENVPSFGILKYPPRAE). Residues 94–121 (SVQPDSPTDVNQENVPSFGILKYPPRAE) constitute a propeptide that is removed on maturation. Positions 96 to 108 (QPDSPTDVNQENV) are enriched in polar residues.

This sequence belongs to the tachykinin family.

It is found in the secreted. In terms of biological role, tachykinins are active peptides which excite neurons, evoke behavioral responses, are potent vasodilators and secretagogues, and contract (directly or indirectly) many smooth muscles. Is a critical central regulator of gonadal function. The sequence is that of Tachykinin-3 (TAC3) from Homo sapiens (Human).